The following is a 448-amino-acid chain: Serine--tRNA ligase (448 aa).

Residue 246-248 participates in L-serine binding; sequence TAE. Residues 277–279 and V293 contribute to the ATP site; that span reads RKE. E300 lines the L-serine pocket. 364–367 is a binding site for ATP; that stretch reads ELAS. An L-serine-binding site is contributed by T399.

Belongs to the class-II aminoacyl-tRNA synthetase family. Type-1 seryl-tRNA synthetase subfamily. In terms of assembly, homodimer. The tRNA molecule binds across the dimer.

The protein localises to the cytoplasm. It catalyses the reaction tRNA(Ser) + L-serine + ATP = L-seryl-tRNA(Ser) + AMP + diphosphate + H(+). The catalysed reaction is tRNA(Sec) + L-serine + ATP = L-seryl-tRNA(Sec) + AMP + diphosphate + H(+). It functions in the pathway aminoacyl-tRNA biosynthesis; selenocysteinyl-tRNA(Sec) biosynthesis; L-seryl-tRNA(Sec) from L-serine and tRNA(Sec): step 1/1. Catalyzes the attachment of serine to tRNA(Ser). Is also able to aminoacylate tRNA(Sec) with serine, to form the misacylated tRNA L-seryl-tRNA(Sec), which will be further converted into selenocysteinyl-tRNA(Sec). The polypeptide is Serine--tRNA ligase (Pyrobaculum islandicum (strain DSM 4184 / JCM 9189 / GEO3)).